Here is a 450-residue protein sequence, read N- to C-terminus: UPF0210 protein CPE1497 (450 aa).

This sequence belongs to the UPF0210 family. As to quaternary structure, homodimer.

The sequence is that of UPF0210 protein CPE1497 from Clostridium perfringens (strain 13 / Type A).